We begin with the raw amino-acid sequence, 189 residues long: MEYKRPFGVKIDLETGVIPGAKRIVRKLSDMRGYFVDEEAYEKLLREDPVVYEVYAIEQEEREGDLNFATTVLYPGKVGKEFFFTKGHYHAKADRAEIYYALKGKGGMLLQTPEGEAEWIPMEPGTVVYVPPYWAHRTVNTGGEPFVFLAIYPADAGHDYGSIKEKGFSKIVIDEGGEVKIVDNPRWSV.

Fe cation is bound by residues His88, His90, Glu97, and His136.

The protein belongs to the archaeal-type GPI family. In terms of assembly, homodimer.

The protein resides in the cytoplasm. The enzyme catalyses alpha-D-glucose 6-phosphate = beta-D-fructose 6-phosphate. The protein operates within carbohydrate degradation; glycolysis; D-glyceraldehyde 3-phosphate and glycerone phosphate from D-glucose: step 2/4. The polypeptide is Glucose-6-phosphate isomerase (Thermococcus gammatolerans (strain DSM 15229 / JCM 11827 / EJ3)).